The primary structure comprises 189 residues: Probable nicotinate-nucleotide adenylyltransferase (189 aa).

This sequence belongs to the NadD family.

The enzyme catalyses nicotinate beta-D-ribonucleotide + ATP + H(+) = deamido-NAD(+) + diphosphate. The protein operates within cofactor biosynthesis; NAD(+) biosynthesis; deamido-NAD(+) from nicotinate D-ribonucleotide: step 1/1. Functionally, catalyzes the reversible adenylation of nicotinate mononucleotide (NaMN) to nicotinic acid adenine dinucleotide (NaAD). This chain is Probable nicotinate-nucleotide adenylyltransferase, found in Bacillus cereus (strain AH187).